Here is a 574-residue protein sequence, read N- to C-terminus: Choline transporter-like protein ctl1 (574 aa).

N-linked (GlcNAc...) asparagine glycans are attached at residues Asn-40 and Asn-101. 8 helical membrane passes run 144–164 (WGLT…LMVW), 189–209 (KDAI…VAIP), 211–231 (FLYF…VYLL), 246–266 (LMLL…YYVW), 291–311 (QITL…FIWV), 336–356 (WVLA…FHAL), 396–416 (YGLC…LHFL), and 434–456 (TSAS…VPYM). Asn-457 carries N-linked (GlcNAc...) asparagine glycosylation. 2 helical membrane-spanning segments follow: residues 485 to 505 (LLAA…NYSI) and 511 to 531 (FYGY…IGAI). Asn-558 carries N-linked (GlcNAc...) asparagine glycosylation.

The protein belongs to the CTL (choline transporter-like) family. In terms of assembly, interacts with atg9.

It localises to the endoplasmic reticulum membrane. Its subcellular location is the preautophagosomal structure membrane. Required for the normal organization of the preautophagosomal structure (PAS) and for the correct subcellular location of atg9. The sequence is that of Choline transporter-like protein ctl1 (ctl1) from Schizosaccharomyces pombe (strain 972 / ATCC 24843) (Fission yeast).